The primary structure comprises 402 residues: uncharacterized protein (402 aa).

The next 11 helical transmembrane spans lie at 12–32, 48–68, 80–100, 101–121, 134–154, 168–188, 212–232, 248–268, 291–311, 339–359, and 367–387; these read FWLI…ITSV, GAAG…SPLA, TLWL…TGYT, AALF…NVLL, GIMI…ASGV, QAFL…IPQL, WYVT…IAWF, WMVS…PVLA, GLLA…IGIG, MSQS…GYLF, and MPIV…QGAG.

Belongs to the major facilitator superfamily. Cyanate porter (TC 2.A.1.17) family.

It is found in the cell membrane. This is an uncharacterized protein from Bacillus subtilis (strain 168).